A 563-amino-acid polypeptide reads, in one-letter code: Arginine--tRNA ligase (563 aa).

Positions 122-132 (PNIAKPISMGH) match the 'HIGH' region motif.

This sequence belongs to the class-I aminoacyl-tRNA synthetase family. As to quaternary structure, monomer.

Its subcellular location is the cytoplasm. The enzyme catalyses tRNA(Arg) + L-arginine + ATP = L-arginyl-tRNA(Arg) + AMP + diphosphate. The protein is Arginine--tRNA ligase of Enterococcus faecalis (strain ATCC 700802 / V583).